Here is a 564-residue protein sequence, read N- to C-terminus: 2-succinyl-5-enolpyruvyl-6-hydroxy-3-cyclohexene-1-carboxylate synthase (564 aa).

This sequence belongs to the TPP enzyme family. MenD subfamily. Homodimer. Requires Mg(2+) as cofactor. It depends on Mn(2+) as a cofactor. Thiamine diphosphate serves as cofactor.

It carries out the reaction isochorismate + 2-oxoglutarate + H(+) = 5-enolpyruvoyl-6-hydroxy-2-succinyl-cyclohex-3-ene-1-carboxylate + CO2. It participates in quinol/quinone metabolism; 1,4-dihydroxy-2-naphthoate biosynthesis; 1,4-dihydroxy-2-naphthoate from chorismate: step 2/7. The protein operates within quinol/quinone metabolism; menaquinone biosynthesis. Its function is as follows. Catalyzes the thiamine diphosphate-dependent decarboxylation of 2-oxoglutarate and the subsequent addition of the resulting succinic semialdehyde-thiamine pyrophosphate anion to isochorismate to yield 2-succinyl-5-enolpyruvyl-6-hydroxy-3-cyclohexene-1-carboxylate (SEPHCHC). The sequence is that of 2-succinyl-5-enolpyruvyl-6-hydroxy-3-cyclohexene-1-carboxylate synthase from Vibrio vulnificus (strain CMCP6).